The primary structure comprises 148 residues: Antigen GM6 (148 aa).

The interval 1-22 (KLKASDSRSFLDPMPEGVPLSE) is disordered. 2 tandem repeats follow at residues 1–68 (KLKA…HELA) and 69–136 (KLKA…HELA). Residues 137–148 (KLKASDSRSFQS) form a 3; truncated repeat.

The protein localises to the cytoplasm. Its subcellular location is the cytoskeleton. The chain is Antigen GM6 (GM6) from Trypanosoma brucei gambiense.